The primary structure comprises 991 residues: MDEVIKAKRQQQNAGSSLRAITIRGAREHNLKNIDVEIPRDKLVVFTGLSGSGKSSLAFDTIYAEGQRRYVESLSAYARQFLEMMQKPDVDQIDGLSPAISIEQKTTSKNPRSTVGTVTEIYDYMRLLWARVGVPYSPATGLPIESQTVSQMVDRVLALPEGTRLYLLAPVVRGRKGEYRKELAEWLKKGFQRVKIDGTFHELAEAPTLDKKFPHDIDVVVDRIVVRADIGQRLAESFETALKLAEGLAVVEFADAPAAAPAEEKKKTAKIHDKSGPERILFSEKFACPVSGFTIPEIEPRLFSFNNPYGACPACGGLGVEQHVDEDLVIPDKELAIGKGAIAPWAKSSSPYYVQTLTALGKHYKFTLTTKWKDLPKKTRDAILHGSGEDEIKFSYEDGVRSYDTKKPFEGVITNINRRYRETESEWAREELAKYFHDVPCGACNGFRLKPEALCVKVGTKHIGEISELSVKKAGEWFETVPEALNKQQNEIAGRILKEIRERLTFLLDVGLNYLTLSRSSGTLSGGESQRIRLASQIGSGLTGVLYVLDEPSIGLHQRDNARLLDTLKRLRDLGNTVVVVEHDEDAIRLADYVLDIGPGAGMHGGHIVAEGTPAEIMRNPKSLTGKYLTGELEVEVPERRPPNHRRTIKVVNARGNNLKNVTAEIPLGLFTCVTGVSGGGKSTLLIDTLYRAIARKLNNASEGAAPHDRIEGLEHIDKIIDIDQSPIGRTPRSNPATYTGAFTPIREWFAGLPEAKARGYEPGRFSFNVKGGRCEACQGDGVIKIEMHFLPDVYVTCDVCKGKRYNRETLEVLFKGKSIADVLDMTVEEAADFFKAVPRVRETFQTLHRVGLDYIHVGQQATTLSGGEAQRVKLAKELSKRATGRTLYILDEPTTGLHFHDVKKLLEVLHELVAQGNTVVVIEHNLEVIKTADWVIDLGPEGGDGGGEIVAWGPPEDIAKAPRSYTGKFLEPVLKKARKPKRRSTSEAAE.

48–55 provides a ligand contact to ATP; that stretch reads GLSGSGKS. 2 ABC transporter domains span residues 345–624 and 644–972; these read WAKS…PKSL and NHRR…KFLE. 676–683 provides a ligand contact to ATP; that stretch reads GVSGGGKS. The segment at 775-801 adopts a C4-type zinc-finger fold; it reads CEACQGDGVIKIEMHFLPDVYVTCDVC.

This sequence belongs to the ABC transporter superfamily. UvrA family. In terms of assembly, forms a heterotetramer with UvrB during the search for lesions.

The protein localises to the cytoplasm. In terms of biological role, the UvrABC repair system catalyzes the recognition and processing of DNA lesions. UvrA is an ATPase and a DNA-binding protein. A damage recognition complex composed of 2 UvrA and 2 UvrB subunits scans DNA for abnormalities. When the presence of a lesion has been verified by UvrB, the UvrA molecules dissociate. The chain is UvrABC system protein A from Bradyrhizobium diazoefficiens (strain JCM 10833 / BCRC 13528 / IAM 13628 / NBRC 14792 / USDA 110).